The sequence spans 418 residues: MHLSDLKHLHVSELVEMAISNEIDGANRLRKQDLIFALLKNQAKKGESIFGEGTLEVLPDGFGFLRSPDTSYLAGPDDIYVSPSQIRRFNLHTGDSIEGEIRTPKDGERYFALVKVDKVNGEAPENSKHKILFENLTPLFPTEQFKLEREIRAEENITGRIIDLISPIGKGQRALLVAPPKSGKTVMLQHIAHAITANHPEAVLIVLLIDERPEEVTEMQRSVRGEVVSSTFDEPATRHVQVAEMVIEKAKRLVEHKKDVVILLDSITRLARAYNTVVPASGKVLTGGVDANALQRPKRFFGAARNVEEGGSLTIVATALIDTGSRMDDVIYEEFKGTGNSEIHLDRRMAEKRIFPALNINRSGTRREELLVPQDQLQRIWVLRKLLYPMDDLEAMEFLQDKIKATKSNQAFFDSMRR.

Residues 48 to 123 (SIFGEGTLEV…VKVDKVNGEA (76 aa)) form the Rho RNA-BD domain. Residues 169-174 (GKGQRA), 181-186 (KSGKTV), and Arg212 each bind ATP.

This sequence belongs to the Rho family. Homohexamer. The homohexamer assembles into an open ring structure.

Its function is as follows. Facilitates transcription termination by a mechanism that involves Rho binding to the nascent RNA, activation of Rho's RNA-dependent ATPase activity, and release of the mRNA from the DNA template. The chain is Transcription termination factor Rho from Chromobacterium violaceum (strain ATCC 12472 / DSM 30191 / JCM 1249 / CCUG 213 / NBRC 12614 / NCIMB 9131 / NCTC 9757 / MK).